The primary structure comprises 326 residues: Eukaryotic translation initiation factor 3 subunit I (326 aa).

5 WD repeats span residues 8 to 47 (GHER…RLGT), 50 to 89 (GHQG…VIAS), 145 to 184 (MTES…KVVD), 188 to 227 (DHSA…CLKT), and 285 to 326 (GHFG…NIFE).

This sequence belongs to the eIF-3 subunit I family. In terms of assembly, component of the eukaryotic translation initiation factor 3 (eIF-3) complex. The eIF-3 complex interacts with pix.

The protein localises to the cytoplasm. In terms of biological role, component of the eukaryotic translation initiation factor 3 (eIF-3) complex, which is involved in protein synthesis of a specialized repertoire of mRNAs and, together with other initiation factors, stimulates binding of mRNA and methionyl-tRNAi to the 40S ribosome. The eIF-3 complex specifically targets and initiates translation of a subset of mRNAs involved in cell proliferation. In Drosophila simulans (Fruit fly), this protein is Eukaryotic translation initiation factor 3 subunit I.